We begin with the raw amino-acid sequence, 139 residues long: D-ribose pyranase (139 aa).

Residue H20 is the Proton donor of the active site. Residues D28, H106, and 128–130 (YAN) each bind substrate.

This sequence belongs to the RbsD / FucU family. RbsD subfamily. In terms of assembly, homodecamer.

Its subcellular location is the cytoplasm. The catalysed reaction is beta-D-ribopyranose = beta-D-ribofuranose. Its pathway is carbohydrate metabolism; D-ribose degradation; D-ribose 5-phosphate from beta-D-ribopyranose: step 1/2. Catalyzes the interconversion of beta-pyran and beta-furan forms of D-ribose. The sequence is that of D-ribose pyranase from Vibrio vulnificus (strain CMCP6).